A 395-amino-acid chain; its full sequence is D-serine dehydratase (395 aa).

The residue at position 46 (Lys-46) is an N6-(pyridoxal phosphate)lysine. The pyridoxal 5'-phosphate site is built by Tyr-184, Tyr-191, Thr-232, Gly-254, and Asn-255. Zn(2+) is bound by residues His-365 and Cys-367.

Belongs to the DSD1 family. The cofactor is pyridoxal 5'-phosphate. It depends on Zn(2+) as a cofactor.

The enzyme catalyses D-serine = pyruvate + NH4(+). Catalyzes the conversion of D-serine to pyruvate and ammonia. Plays a role in D-serine detoxification. The protein is D-serine dehydratase of Dictyostelium discoideum (Social amoeba).